The primary structure comprises 453 residues: DNA repair protein RadA (453 aa).

A C4-type zinc finger spans residues 10–27 (CQECGYQSPKYLGRCPNC). 95 to 102 (GDPGIGKS) is an ATP binding site. The short motif at 251 to 255 (KNRFG) is the RadA KNRFG motif element. The segment at 350 to 453 (DAYLKSAGGV…VGQVLKAVFS (104 aa)) is lon-protease-like.

Belongs to the RecA family. RadA subfamily.

Its function is as follows. DNA-dependent ATPase involved in processing of recombination intermediates, plays a role in repairing DNA breaks. Stimulates the branch migration of RecA-mediated strand transfer reactions, allowing the 3' invading strand to extend heteroduplex DNA faster. Binds ssDNA in the presence of ADP but not other nucleotides, has ATPase activity that is stimulated by ssDNA and various branched DNA structures, but inhibited by SSB. Does not have RecA's homology-searching function. In Streptococcus pyogenes serotype M6 (strain ATCC BAA-946 / MGAS10394), this protein is DNA repair protein RadA.